Consider the following 421-residue polypeptide: UPF0300 protein C737.04 (421 aa).

The protein belongs to the UPF0300 family.

It is found in the cytoplasm. In Schizosaccharomyces pombe (strain 972 / ATCC 24843) (Fission yeast), this protein is UPF0300 protein C737.04.